Here is a 301-residue protein sequence, read N- to C-terminus: 2-(hydroxymethyl)glutarate dehydrogenase (301 aa).

Residues Gly8 to Asn22 and Ser99 each bind NAD(+). The active site involves Lys174. NAD(+) is bound at residue Lys243.

This sequence belongs to the HIBADH-related family. Homotetramer.

The catalysed reaction is (S)-2-hydroxymethylglutarate + NAD(+) = 2-formylglutarate + NADH + H(+). The protein operates within cofactor degradation; nicotinate degradation; propanoate and pyruvate from 6-hydroxynicotinate: step 3/8. Functionally, catalyzes the conversion of 2-formylglutarate to (S)-2-hydroxymethylglutarate. Has very low activity with (S)-3-hydroxyisobutyrate. The polypeptide is 2-(hydroxymethyl)glutarate dehydrogenase (Eubacterium barkeri (Clostridium barkeri)).